A 450-amino-acid chain; its full sequence is Chromosomal replication initiator protein DnaA (450 aa).

The tract at residues 1–79 is domain I, interacts with DnaA modulators; it reads MENIHDLWNR…TGEELLIKFI (79 aa). The tract at residues 79–111 is domain II; sequence ITPPNQSEDDFEFQRSSKKHRKPYEESTDFPQS. Residues 112–328 are domain III, AAA+ region; sequence MLNPKYTFDT…GALIRVVAYS (217 aa). The ATP site is built by Gly156, Gly158, Lys159, and Thr160. The segment at 329–450 is domain IV, binds dsDNA; it reads SLINKEITAD…KEIEEKLKQL (122 aa).

This sequence belongs to the DnaA family. Oligomerizes as a right-handed, spiral filament on DNA at oriC.

Its subcellular location is the cytoplasm. In terms of biological role, plays an essential role in the initiation and regulation of chromosomal replication. ATP-DnaA binds to the origin of replication (oriC) to initiate formation of the DNA replication initiation complex once per cell cycle. Binds the DnaA box (a 9 base pair repeat at the origin) and separates the double-stranded (ds)DNA. Forms a right-handed helical filament on oriC DNA; dsDNA binds to the exterior of the filament while single-stranded (ss)DNA is stabiized in the filament's interior. The ATP-DnaA-oriC complex binds and stabilizes one strand of the AT-rich DNA unwinding element (DUE), permitting loading of DNA polymerase. After initiation quickly degrades to an ADP-DnaA complex that is not apt for DNA replication. Binds acidic phospholipids. The sequence is that of Chromosomal replication initiator protein DnaA from Geobacillus sp. (strain WCH70).